Reading from the N-terminus, the 177-residue chain is Large ribosomal subunit protein uL6 (177 aa).

This sequence belongs to the universal ribosomal protein uL6 family. As to quaternary structure, part of the 50S ribosomal subunit.

This protein binds to the 23S rRNA, and is important in its secondary structure. It is located near the subunit interface in the base of the L7/L12 stalk, and near the tRNA binding site of the peptidyltransferase center. The protein is Large ribosomal subunit protein uL6 of Rubrobacter xylanophilus (strain DSM 9941 / JCM 11954 / NBRC 16129 / PRD-1).